Reading from the N-terminus, the 294-residue chain is uncharacterized protein (294 aa).

It localises to the mitochondrion. This is an uncharacterized protein from Zea mays (Maize).